Consider the following 494-residue polypeptide: NADH-quinone oxidoreductase subunit N (494 aa).

Helical transmembrane passes span 9 to 29 (VIPE…DLFL), 36 to 56 (LTYV…LSDF), 73 to 93 (PMSN…LVYS), 107 to 127 (LGGE…VMMS), 131 to 151 (FLII…LVAF), 166 to 186 (FVLG…LYGA), 209 to 229 (LIFG…AVPF), 241 to 261 (PTAV…AITI), 278 to 298 (MLTI…IMQT), 304 to 324 (LAYS…SGVV), 339 to 359 (MFYV…IMLL), 382 to 402 (FAFV…VVGF), 416 to 436 (GQIW…FYYL), and 469 to 489 (ALLA…AAII).

It belongs to the complex I subunit 2 family. NDH-1 is composed of 14 different subunits. Subunits NuoA, H, J, K, L, M, N constitute the membrane sector of the complex.

It is found in the cell inner membrane. It catalyses the reaction a quinone + NADH + 5 H(+)(in) = a quinol + NAD(+) + 4 H(+)(out). Functionally, NDH-1 shuttles electrons from NADH, via FMN and iron-sulfur (Fe-S) centers, to quinones in the respiratory chain. The immediate electron acceptor for the enzyme in this species is believed to be ubiquinone. Couples the redox reaction to proton translocation (for every two electrons transferred, four hydrogen ions are translocated across the cytoplasmic membrane), and thus conserves the redox energy in a proton gradient. This is NADH-quinone oxidoreductase subunit N from Herminiimonas arsenicoxydans.